The following is a 389-amino-acid chain: Chalcone synthase 2 (389 aa).

C164 is an active-site residue.

Belongs to the thiolase-like superfamily. Chalcone/stilbene synthases family.

It carries out the reaction (E)-4-coumaroyl-CoA + 3 malonyl-CoA + 3 H(+) = 2',4,4',6'-tetrahydroxychalcone + 3 CO2 + 4 CoA. Its pathway is secondary metabolite biosynthesis; flavonoid biosynthesis. Its function is as follows. The primary product of this enzyme is 4,2',4',6'-tetrahydroxychalcone (also termed naringenin-chalcone or chalcone) which can under specific conditions spontaneously isomerize into naringenin. The polypeptide is Chalcone synthase 2 (CHS2) (Pisum sativum (Garden pea)).